Reading from the N-terminus, the 338-residue chain is tRNA N6-adenosine threonylcarbamoyltransferase (338 aa).

Positions 111 and 115 each coordinate Fe cation. Residues 134 to 138 (LVSGG), Asp167, Gly180, and Asn272 contribute to the substrate site. Asp300 contributes to the Fe cation binding site.

Belongs to the KAE1 / TsaD family. Requires Fe(2+) as cofactor.

Its subcellular location is the cytoplasm. It carries out the reaction L-threonylcarbamoyladenylate + adenosine(37) in tRNA = N(6)-L-threonylcarbamoyladenosine(37) in tRNA + AMP + H(+). In terms of biological role, required for the formation of a threonylcarbamoyl group on adenosine at position 37 (t(6)A37) in tRNAs that read codons beginning with adenine. Is involved in the transfer of the threonylcarbamoyl moiety of threonylcarbamoyl-AMP (TC-AMP) to the N6 group of A37, together with TsaE and TsaB. TsaD likely plays a direct catalytic role in this reaction. This chain is tRNA N6-adenosine threonylcarbamoyltransferase, found in Shewanella oneidensis (strain ATCC 700550 / JCM 31522 / CIP 106686 / LMG 19005 / NCIMB 14063 / MR-1).